A 98-amino-acid chain; its full sequence is Protein S100-A13 (98 aa).

Residues 18 to 53 (TTFFTFARQEGRKDSLSVNEFKELVTQQLPHLLKDV) form the EF-hand domain. Residues S32, E37, D64, N66, D68, E70, and E75 each contribute to the Ca(2+) site. S32 carries the post-translational modification Phosphoserine.

The protein belongs to the S-100 family. Homodimer. Part of a copper-dependent multiprotein complex containing S100A13, FGF1 and SYT1. Interacts with FGF1 and SYT1. Interacts with IL1A. Expressed in heart and skeletal muscle.

It localises to the cytoplasm. The protein localises to the secreted. Its function is as follows. Plays a role in the export of proteins that lack a signal peptide and are secreted by an alternative pathway. Binds two calcium ions per subunit. Binds one copper ion. Binding of one copper ion does not interfere with calcium binding. Required for the copper-dependent stress-induced export of IL1A and FGF1. The calcium-free protein binds to lipid vesicles containing phosphatidylserine, but not to vesicles containing phosphatidylcholine. The polypeptide is Protein S100-A13 (S100A13) (Homo sapiens (Human)).